Here is a 247-residue protein sequence, read N- to C-terminus: tRNA pseudouridine synthase A (247 aa).

Asp-52 acts as the Nucleophile in catalysis. Tyr-113 is a substrate binding site.

It belongs to the tRNA pseudouridine synthase TruA family. As to quaternary structure, homodimer.

The enzyme catalyses uridine(38/39/40) in tRNA = pseudouridine(38/39/40) in tRNA. Formation of pseudouridine at positions 38, 39 and 40 in the anticodon stem and loop of transfer RNAs. The chain is tRNA pseudouridine synthase A from Bartonella quintana (strain Toulouse) (Rochalimaea quintana).